The sequence spans 901 residues: Protein translocase subunit SecA (901 aa).

ATP is bound by residues Q87, G105 to T109, and D512. Residues A852 to S901 form a disordered region. 4 residues coordinate Zn(2+): C885, C887, C896, and H897. Basic residues predominate over residues K891–S901.

It belongs to the SecA family. In terms of assembly, monomer and homodimer. Part of the essential Sec protein translocation apparatus which comprises SecA, SecYEG and auxiliary proteins SecDF-YajC and YidC. The cofactor is Zn(2+).

The protein localises to the cell inner membrane. The protein resides in the cytoplasm. It catalyses the reaction ATP + H2O + cellular proteinSide 1 = ADP + phosphate + cellular proteinSide 2.. In terms of biological role, part of the Sec protein translocase complex. Interacts with the SecYEG preprotein conducting channel. Has a central role in coupling the hydrolysis of ATP to the transfer of proteins into and across the cell membrane, serving both as a receptor for the preprotein-SecB complex and as an ATP-driven molecular motor driving the stepwise translocation of polypeptide chains across the membrane. This chain is Protein translocase subunit SecA, found in Klebsiella pneumoniae subsp. pneumoniae (strain ATCC 700721 / MGH 78578).